The sequence spans 202 residues: Adapter protein MecA 2 (202 aa).

It belongs to the MecA family. Homodimer.

Functionally, enables the recognition and targeting of unfolded and aggregated proteins to the ClpC protease or to other proteins involved in proteolysis. Acts negatively in the development of competence by binding ComK and recruiting it to the ClpCP protease. When overexpressed, inhibits sporulation. Also involved in Spx degradation by ClpC. The sequence is that of Adapter protein MecA 2 (mecA2) from Bacillus anthracis.